A 144-amino-acid polypeptide reads, in one-letter code: Large ribosomal subunit protein uL15 (144 aa).

The tract at residues 1-52 is disordered; sequence MRLNSLSPAEGAKHSAKRLGRGIGSGLGKTGGRGHKGQKSRTGGGVRRGFEG. Over residues 21–31 the composition is skewed to gly residues; the sequence is RGIGSGLGKTG.

Belongs to the universal ribosomal protein uL15 family. As to quaternary structure, part of the 50S ribosomal subunit.

Binds to the 23S rRNA. This is Large ribosomal subunit protein uL15 from Actinobacillus pleuropneumoniae serotype 5b (strain L20).